The primary structure comprises 100 residues: Small ribosomal subunit protein bS18c (100 aa).

The protein belongs to the bacterial ribosomal protein bS18 family. As to quaternary structure, part of the 30S ribosomal subunit.

The protein resides in the plastid. It localises to the chloroplast. The chain is Small ribosomal subunit protein bS18c from Pleurastrum terricola (Filamentous green alga).